The following is a 161-amino-acid chain: uncharacterized protein (161 aa).

This is an uncharacterized protein from Mycobacterium tuberculosis (strain CDC 1551 / Oshkosh).